A 490-amino-acid polypeptide reads, in one-letter code: Glutamyl-tRNA(Gln) amidotransferase subunit A (490 aa).

Residues Lys78 and Ser158 each act as charge relay system in the active site. The disordered stretch occupies residues Ser131–Ser159. Catalysis depends on Ser182, which acts as the Acyl-ester intermediate.

It belongs to the amidase family. GatA subfamily. Heterotrimer of A, B and C subunits.

It catalyses the reaction L-glutamyl-tRNA(Gln) + L-glutamine + ATP + H2O = L-glutaminyl-tRNA(Gln) + L-glutamate + ADP + phosphate + H(+). Functionally, allows the formation of correctly charged Gln-tRNA(Gln) through the transamidation of misacylated Glu-tRNA(Gln) in organisms which lack glutaminyl-tRNA synthetase. The reaction takes place in the presence of glutamine and ATP through an activated gamma-phospho-Glu-tRNA(Gln). The protein is Glutamyl-tRNA(Gln) amidotransferase subunit A of Hyphomonas neptunium (strain ATCC 15444).